The chain runs to 462 residues: Semenogelin-1 (462 aa).

The signal sequence occupies residues 1 to 23 (MKPNIIFVLSLLLILEKQAAVMG). Pyrrolidone carboxylic acid is present on Gln24. The interval 24–61 (QKGGSKGRLPSEFSQFPHGQKGQHYSGQKGKQQTESKG) is disordered. The span at 46–61 (QHYSGQKGKQQTESKG) shows a compositional bias: polar residues. A run of 3 repeats spans residues 70-129 (HVDA…VVIH), 141-200 (NPSQ…QTEE), and 201-260 (LVAN…QDEL). The tract at residues 70 to 439 (HVDANDHDQS…SHGGLDIVII (370 aa)) is repeat-rich region. 2 disordered regions span residues 131 to 157 (KGGK…GISS) and 173 to 194 (KEQT…QSSY). Over residues 138-157 (GTQNPSQDQGNSPSGKGISS) the composition is skewed to polar residues. Residues 164 to 283 (ERLWVHGLSK…NQDQQHGRKA (120 aa)) are interaction with EPPIN. A 2 X 60 AA tandem repeats, type 1 region spans residues 261–380 (LVYNKNQHQT…QRSIYSQTEK (120 aa)). The disordered stretch occupies residues 270–432 (TKNLNQDQQH…KGRHQHGSHG (163 aa)). Polar residues-rich tracts occupy residues 308–317 (DVSQSSIYSQ), 324–335 (GKSQKQITIPSQ), and 343–352 (ANKISYQSSS). A 3-2 repeat occupies 381–439 (LVAGKSQIQAPNPKQEPWHGENAKGESGQSTNREQDLLSHEQKGRHQHGSHGGLDIVII). Basic and acidic residues predominate over residues 413-424 (REQDLLSHEQKG).

It belongs to the semenogelin family. As to quaternary structure, occurs in disulfide-linked complexes which may also contain two less abundant 71- and 76-kDa semenogelin-related polypeptides. Interacts with EPPIN (via C-terminus); Cys-239 is a critical amino acid for both binding to EPPIN. Transglutaminase substrate. Post-translationally, rapidly cleaved after ejaculation by KLK3/PSA, resulting in liquefaction of the semen coagulum and the progressive release of motile spermatozoa. Seminal vesicle.

The protein localises to the secreted. Predominant protein in semen. It participates in the formation of a gel matrix entrapping the accessory gland secretions and ejaculated spermatozoa. Fragments of semenogelin and/or fragments of the related proteins may contribute to the activation of progressive sperm movements as the gel-forming proteins are fragmented by KLK3/PSA. Its function is as follows. Alpha-inhibin-92 and alpha-inhibin-31, derived from the proteolytic degradation of semenogelin, inhibit the secretion of pituitary follicle-stimulating hormone. This is Semenogelin-1 (SEMG1) from Homo sapiens (Human).